The primary structure comprises 501 residues: Glutamyl-tRNA(Gln) amidotransferase subunit A (501 aa).

Residues Lys80 and Ser155 each act as charge relay system in the active site. The active-site Acyl-ester intermediate is Ser179.

Belongs to the amidase family. GatA subfamily. Heterotrimer of A, B and C subunits.

It catalyses the reaction L-glutamyl-tRNA(Gln) + L-glutamine + ATP + H2O = L-glutaminyl-tRNA(Gln) + L-glutamate + ADP + phosphate + H(+). Its function is as follows. Allows the formation of correctly charged Gln-tRNA(Gln) through the transamidation of misacylated Glu-tRNA(Gln) in organisms which lack glutaminyl-tRNA synthetase. The reaction takes place in the presence of glutamine and ATP through an activated gamma-phospho-Glu-tRNA(Gln). This Cupriavidus taiwanensis (strain DSM 17343 / BCRC 17206 / CCUG 44338 / CIP 107171 / LMG 19424 / R1) (Ralstonia taiwanensis (strain LMG 19424)) protein is Glutamyl-tRNA(Gln) amidotransferase subunit A.